Consider the following 206-residue polypeptide: Small ribosomal subunit protein uS3 (206 aa).

Positions 39-107 (IRSYINESFK…SVEVNVVGVK (69 aa)) constitute a KH type-2 domain.

It belongs to the universal ribosomal protein uS3 family. As to quaternary structure, part of the 30S ribosomal subunit. Forms a tight complex with proteins S10 and S14.

Binds the lower part of the 30S subunit head. Binds mRNA in the 70S ribosome, positioning it for translation. This Wolbachia pipientis subsp. Culex pipiens (strain wPip) protein is Small ribosomal subunit protein uS3.